A 171-amino-acid chain; its full sequence is NADH-quinone oxidoreductase subunit C (171 aa).

It belongs to the complex I 30 kDa subunit family. As to quaternary structure, NDH-1 is composed of 14 different subunits. Subunits NuoB, C, D, E, F, and G constitute the peripheral sector of the complex.

Its subcellular location is the cell membrane. It carries out the reaction a quinone + NADH + 5 H(+)(in) = a quinol + NAD(+) + 4 H(+)(out). NDH-1 shuttles electrons from NADH, via FMN and iron-sulfur (Fe-S) centers, to quinones in the respiratory chain. The immediate electron acceptor for the enzyme in this species is believed to be ubiquinone. Couples the redox reaction to proton translocation (for every two electrons transferred, four hydrogen ions are translocated across the cytoplasmic membrane), and thus conserves the redox energy in a proton gradient. In Herpetosiphon aurantiacus (strain ATCC 23779 / DSM 785 / 114-95), this protein is NADH-quinone oxidoreductase subunit C.